The sequence spans 824 residues: C-Jun-amino-terminal kinase-interacting protein 2 (824 aa).

4 disordered regions span residues 1 to 28, 40 to 160, 172 to 349, and 361 to 501; these read MADR…QDIS, ITDD…GFDL, CSPA…DSPW, and EGSS…APRD. A compositionally biased stretch (acidic residues) spans 77–110; it reads DFQEFEMIDDNEEEDDEDEEEEEEEEEGDGEGQE. Residues 110–275 are JNK-binding domain (JBD); sequence EGGDPGSEAP…RMISSISETE (166 aa). Positions 141 to 156 are enriched in polar residues; it reads LRLTTLGAQDSLNNNG. The interval 239 to 498 is necessary for interaction with FGF13; the sequence is GRGGRRSSQE…PGGRGTGPSA (260 aa). 3 positions are modified to phosphoserine: S254, S302, and S305. Positions 268–305 are enriched in low complexity; it reads ISSISETELELSSDGGSSSSGRSSHLTNSIEEASSPAS. The span at 327 to 346 shows a compositional bias: acidic residues; sequence TNSEYESGSESEPDLSEDAD. The segment covering 416-432 has biased composition (pro residues); that stretch reads APPPPAPAAPRPGPAQP. Over residues 451–467 the composition is skewed to low complexity; it reads AAPGRAARPGRACSAAC. A compositionally biased stretch (acidic residues) spans 468–484; sequence SEEEDEEDDEEEEDAED. Residues 604–665 form the SH3 domain; it reads EREQTHRAVF…PAFYAHAVPG (62 aa). The region spanning 677–813 is the PID domain; the sequence is PCWVERFDVQ…FLEYYQEHLA (137 aa).

This sequence belongs to the JIP scaffold family. In terms of assembly, forms homo- or heterooligomeric complexes. Binds specific components of the JNK signaling pathway namely JNK1, JNK2, JNK3, MAP2K7, MAP3K10, MAP3K11, MAP3K12 and MAPK13. Also binds the proline-rich domain-containing splice variant of apolipoprotein E receptor 2 (ApoER2). Binds the cytoplasmic tails of LRP1 and LRP2 (Megalin). Binds the TPR motif-containing C-terminal of kinesin light chain, Klc1, pre-assembled MAPK8IP1 scaffolding complexes are then transported as a cargo of kinesin, to the required subcellular location. Interacts with the cytoplasmic domain of APP. Interacts with DCLK2. Interacts with TIAM1 and TIAM2. Interacts with FGF13; enables the interaction with MAPK13 and may regulate the MAPK8IP2 scaffolding activity. Interacts with SH3RF2. In terms of tissue distribution, expressed mainly in the brain and pancreas, including insulin-secreting cells. In the nervous system, more abundantly expressed in the cerebellum, pituitary gland, occipital lobe and the amygdala. Also expressed in fetal brain. Very low levels found in uterus, ovary, prostate, colon, testis, adrenal gland, thyroid gland and salivary gland.

It is found in the cytoplasm. Its function is as follows. The JNK-interacting protein (JIP) group of scaffold proteins selectively mediates JNK signaling by aggregating specific components of the MAPK cascade to form a functional JNK signaling module. JIP2 inhibits IL1 beta-induced apoptosis in insulin-secreting cells. May function as a regulator of vesicle transport, through interactions with the JNK-signaling components and motor proteins. The chain is C-Jun-amino-terminal kinase-interacting protein 2 (MAPK8IP2) from Homo sapiens (Human).